The sequence spans 416 residues: Glutamyl-tRNA reductase (416 aa).

Substrate-binding positions include threonine 51–arginine 54, serine 110, glutamate 115–glutamine 117, and glutamine 121. The active-site Nucleophile is cysteine 52. NADP(+) is bound at residue glycine 190–glycine 195.

It belongs to the glutamyl-tRNA reductase family. As to quaternary structure, homodimer.

It carries out the reaction (S)-4-amino-5-oxopentanoate + tRNA(Glu) + NADP(+) = L-glutamyl-tRNA(Glu) + NADPH + H(+). It functions in the pathway porphyrin-containing compound metabolism; protoporphyrin-IX biosynthesis; 5-aminolevulinate from L-glutamyl-tRNA(Glu): step 1/2. Functionally, catalyzes the NADPH-dependent reduction of glutamyl-tRNA(Glu) to glutamate 1-semialdehyde (GSA). The polypeptide is Glutamyl-tRNA reductase (Francisella tularensis subsp. tularensis (strain FSC 198)).